Reading from the N-terminus, the 92-residue chain is MAHKKGASSSSNGRDSESKRLGVKRFGGQQVKAGEIIVRQRGTKFHPGENVGRGGDDTLFALAAGSVEFGVKRGRRLVNIVPAEEAAAEATA.

The interval 1-26 (MAHKKGASSSSNGRDSESKRLGVKRF) is disordered.

The protein belongs to the bacterial ribosomal protein bL27 family.

This chain is Large ribosomal subunit protein bL27, found in Corynebacterium aurimucosum (strain ATCC 700975 / DSM 44827 / CIP 107346 / CN-1) (Corynebacterium nigricans).